We begin with the raw amino-acid sequence, 428 residues long: Delta-aminolevulinic acid dehydratase, chloroplastic (428 aa).

The active-site Schiff-base intermediate with substrate is Lys294. 2 residues coordinate 5-aminolevulinate: Arg304 and Lys316. Position 332 (Glu332) interacts with Mg(2+). Residue Lys347 is the Schiff-base intermediate with substrate of the active site. Positions 373 and 412 each coordinate 5-aminolevulinate.

Belongs to the ALAD family. As to quaternary structure, homooctamer. Mg(2+) serves as cofactor.

It is found in the plastid. Its subcellular location is the chloroplast. It catalyses the reaction 2 5-aminolevulinate = porphobilinogen + 2 H2O + H(+). Its pathway is porphyrin-containing compound metabolism; protoporphyrin-IX biosynthesis; coproporphyrinogen-III from 5-aminolevulinate: step 1/4. In terms of biological role, catalyzes an early step in the biosynthesis of tetrapyrroles. Binds two molecules of 5-aminolevulinate per subunit, each at a distinct site, and catalyzes their condensation to form porphobilinogen. This is Delta-aminolevulinic acid dehydratase, chloroplastic (HEMB) from Hordeum vulgare (Barley).